We begin with the raw amino-acid sequence, 97 residues long: Citrate lyase acyl carrier protein (97 aa).

S14 is modified (O-(phosphoribosyl dephospho-coenzyme A)serine).

This sequence belongs to the CitD family. As to quaternary structure, oligomer with a subunit composition of (alpha,beta,gamma)6.

It is found in the cytoplasm. In terms of biological role, covalent carrier of the coenzyme of citrate lyase. In Enterobacter sp. (strain 638), this protein is Citrate lyase acyl carrier protein.